The chain runs to 79 residues: Small ribosomal subunit protein uS17 (79 aa).

It belongs to the universal ribosomal protein uS17 family. In terms of assembly, part of the 30S ribosomal subunit.

Its function is as follows. One of the primary rRNA binding proteins, it binds specifically to the 5'-end of 16S ribosomal RNA. This is Small ribosomal subunit protein uS17 from Roseobacter denitrificans (strain ATCC 33942 / OCh 114) (Erythrobacter sp. (strain OCh 114)).